The chain runs to 148 residues: MQVILKEDVVNLGYKDDIVTVKDGYGRNFLIPTGKAVIASESAKKVLAENLKQRAHKLAKIKEDAQTLAAKLEGVALTIGAKTSSTGTIFGSVTNIQVAEALAKAGFENIDRKIIYIKESVKEVGSYKAVLKLHKEVSVEVPFEVVSE.

It belongs to the bacterial ribosomal protein bL9 family.

Functionally, binds to the 23S rRNA. In Parabacteroides distasonis (strain ATCC 8503 / DSM 20701 / CIP 104284 / JCM 5825 / NCTC 11152), this protein is Large ribosomal subunit protein bL9.